The chain runs to 114 residues: UPF0102 protein HP_0823 (114 aa).

This sequence belongs to the UPF0102 family.

This is UPF0102 protein HP_0823 from Helicobacter pylori (strain ATCC 700392 / 26695) (Campylobacter pylori).